A 150-amino-acid polypeptide reads, in one-letter code: Catabolic 3-dehydroquinase 1 (150 aa).

The Proton acceptor role is filled by Tyr-24. Substrate contacts are provided by Asn-75, His-81, and Asp-88. The Proton donor role is filled by His-101. Substrate-binding positions include 102-103 and Arg-112; that span reads VS.

The protein belongs to the type-II 3-dehydroquinase family. In terms of assembly, homododecamer. Adopts a ring-like structure, composed of an arrangement of two hexameric rings stacked on top of one another.

It carries out the reaction 3-dehydroquinate = 3-dehydroshikimate + H2O. The protein operates within aromatic compound metabolism; 3,4-dihydroxybenzoate biosynthesis; 3,4-dihydroxybenzoate from 3-dehydroquinate: step 1/2. Its function is as follows. Is involved in the catabolism of quinate. Allows the utilization of quinate as carbon source via the beta-ketoadipate pathway. The polypeptide is Catabolic 3-dehydroquinase 1 (Aspergillus fumigatus (strain ATCC MYA-4609 / CBS 101355 / FGSC A1100 / Af293) (Neosartorya fumigata)).